Consider the following 1036-residue polypeptide: Mitogen-activated protein kinase kinase kinase 21 (1036 aa).

The interval 1 to 36 (MALRGAAGATDTPVSSAGGAPGGSASSSSTSSGGSA) is disordered. Residues 15–36 (SSAGGAPGGSASSSSTSSGGSA) show a composition bias toward low complexity. The region spanning 38–102 (AGAGLWAALY…PANYVAPCRP (65 aa)) is the SH3 domain. The region spanning 124–401 (LELKELIGAG…ALILEQLTAI (278 aa)) is the Protein kinase domain. ATP is bound by residues 130–138 (IGAGGFGQV) and Lys-151. The active-site Proton acceptor is the Asp-263. Phosphothreonine; by autocatalysis is present on Thr-299. Ser-303 carries the post-translational modification Phosphoserine; by autocatalysis and MAP4K1. Leucine-zipper stretches follow at residues 425–446 (IQQM…EEEL) and 460–481 (LKRR…ELNI). The interval 517-551 (SDFQHKITVQASPNLDKRRSLNSSSSSPPSSPTMM) is disordered. Ser-528, Ser-543, and Ser-547 each carry phosphoserine. Position 592 is a phosphothreonine (Thr-592). Phosphoserine is present on Ser-614. Residues 748 to 763 (AEEPLPKEEKKKREGI) show a composition bias toward basic and acidic residues. Disordered regions lie at residues 748-791 (AEEP…SSPP) and 923-954 (PHSH…RSRS).

It belongs to the protein kinase superfamily. STE Ser/Thr protein kinase family. MAP kinase kinase kinase subfamily. Homodimer. Interacts with TLR4. The cofactor is Mg(2+). Post-translationally, autophosphorylation on serine and threonine residues within the activation loop plays a role in enzyme activation.

It catalyses the reaction L-seryl-[protein] + ATP = O-phospho-L-seryl-[protein] + ADP + H(+). It carries out the reaction L-threonyl-[protein] + ATP = O-phospho-L-threonyl-[protein] + ADP + H(+). Homodimerization via the leucine zipper domains is required for autophosphorylation and subsequent activation. In terms of biological role, negative regulator of TLR4 signaling. Does not activate JNK1/MAPK8 pathway, p38/MAPK14, nor ERK2/MAPK1 pathways. This Homo sapiens (Human) protein is Mitogen-activated protein kinase kinase kinase 21.